The following is a 341-amino-acid chain: GTPase Obg (341 aa).

The Obg domain maps to 1–159; it reads MKFVDEALIK…RNLRLELRVL (159 aa). A disordered region spans residues 128 to 150; it reads TRYKSSVNRSPRQTTPGSPGESR. Residues 129-144 are compositionally biased toward polar residues; the sequence is RYKSSVNRSPRQTTPG. The OBG-type G domain maps to 160-334; it reads ADVGLLGLPN…LCYALMQLID (175 aa). Residues 166 to 173, 191 to 195, 213 to 216, 283 to 286, and 315 to 317 each bind GTP; these read GLPNAGKS, FTTLH, DIPG, NKID, and SAI. Mg(2+) is bound by residues Ser173 and Thr193.

It belongs to the TRAFAC class OBG-HflX-like GTPase superfamily. OBG GTPase family. As to quaternary structure, monomer. Mg(2+) serves as cofactor.

The protein localises to the cytoplasm. In terms of biological role, an essential GTPase which binds GTP, GDP and possibly (p)ppGpp with moderate affinity, with high nucleotide exchange rates and a fairly low GTP hydrolysis rate. Plays a role in control of the cell cycle, stress response, ribosome biogenesis and in those bacteria that undergo differentiation, in morphogenesis control. The chain is GTPase Obg from Legionella pneumophila (strain Lens).